Here is a 214-residue protein sequence, read N- to C-terminus: Ribosomal RNA small subunit methyltransferase G (214 aa).

S-adenosyl-L-methionine is bound by residues Gly-81, Met-86, 132 to 133, and Arg-147; that span reads VE.

The protein belongs to the methyltransferase superfamily. RNA methyltransferase RsmG family.

The protein resides in the cytoplasm. The catalysed reaction is guanosine(527) in 16S rRNA + S-adenosyl-L-methionine = N(7)-methylguanosine(527) in 16S rRNA + S-adenosyl-L-homocysteine. Functionally, specifically methylates the N7 position of guanine in position 527 of 16S rRNA. This chain is Ribosomal RNA small subunit methyltransferase G, found in Pseudomonas aeruginosa (strain LESB58).